Reading from the N-terminus, the 127-residue chain is LIM domain-containing protein 2 (127 aa).

Met-1 is subject to N-acetylmethionine. The disordered stretch occupies residues 1 to 24 (MFQAAGAAQATPSHDAKGGGSSTV). The region spanning 38 to 98 (ETCAACQKTV…KPHFQQLFKS (61 aa)) is the LIM zinc-binding domain. Positions 40, 43, 61, 64, 67, 70, 88, and 91 each coordinate Zn(2+).

In terms of assembly, interacts with ILK.

It is found in the cytoplasm. It localises to the nucleus. In terms of biological role, acts as an activator of the protein-kinase ILK, thereby regulating cell motility. This chain is LIM domain-containing protein 2, found in Homo sapiens (Human).